Reading from the N-terminus, the 284-residue chain is D-tagatose-1,6-bisphosphate aldolase subunit GatY (284 aa).

D82 functions as the Proton donor in the catalytic mechanism. Positions 83 and 180 each coordinate Zn(2+). G181 lines the dihydroxyacetone phosphate pocket. A Zn(2+)-binding site is contributed by H208. Dihydroxyacetone phosphate contacts are provided by residues 209–211 (GAS) and 230–233 (NVAT).

This sequence belongs to the class II fructose-bisphosphate aldolase family. TagBP aldolase GatY subfamily. Forms a complex with GatZ. Requires Zn(2+) as cofactor.

It catalyses the reaction D-tagatofuranose 1,6-bisphosphate = D-glyceraldehyde 3-phosphate + dihydroxyacetone phosphate. Its pathway is carbohydrate metabolism; D-tagatose 6-phosphate degradation; D-glyceraldehyde 3-phosphate and glycerone phosphate from D-tagatose 6-phosphate: step 2/2. In terms of biological role, catalytic subunit of the tagatose-1,6-bisphosphate aldolase GatYZ, which catalyzes the reversible aldol condensation of dihydroxyacetone phosphate (DHAP or glycerone-phosphate) with glyceraldehyde 3-phosphate (G3P) to produce tagatose 1,6-bisphosphate (TBP). Requires GatZ subunit for full activity and stability. Is involved in the catabolism of galactitol. The chain is D-tagatose-1,6-bisphosphate aldolase subunit GatY from Escherichia coli O6:K15:H31 (strain 536 / UPEC).